The primary structure comprises 335 residues: UPF0353 protein MMAR_2288 (335 aa).

Helical transmembrane passes span 18–38 (WFFLFIFVIAGLIAVYVVLQL) and 67–87 (IPAMLLALSLVLFTVAMAGPT). The VWFA domain maps to 98–294 (VVMLVIDVSQ…AELNSVYASL (197 aa)). Residues 309–329 (MGWLRLGALVLVAAALAALLI) form a helical membrane-spanning segment.

This sequence belongs to the UPF0353 family.

The protein localises to the cell membrane. The chain is UPF0353 protein MMAR_2288 from Mycobacterium marinum (strain ATCC BAA-535 / M).